A 414-amino-acid polypeptide reads, in one-letter code: 26S proteasome regulatory subunit 8 homolog (414 aa).

197 to 204 (GPPGTGKT) lines the ATP pocket.

The protein belongs to the AAA ATPase family.

It is found in the cytoplasm. The protein localises to the nucleus. Its function is as follows. The 26S proteasome is involved in the ATP-dependent degradation of ubiquitinated proteins. The regulatory (or ATPase) complex confers ATP dependency and substrate specificity to the 26S complex. The sequence is that of 26S proteasome regulatory subunit 8 homolog from Naegleria fowleri (Brain eating amoeba).